The primary structure comprises 115 residues: Double-headed protease inhibitor, submandibular gland (115 aa).

Kazal-like domains lie at 6 to 66 (IGRE…ACDI) and 67 to 115 (ECTE…HGEC). Cystine bridges form between Cys12–Cys46, Cys24–Cys43, Cys32–Cys64, Cys68–Cys97, Cys75–Cys94, and Cys83–Cys115.

The protein localises to the secreted. Its function is as follows. This inhibitor is composed of two homologous actively inhibiting halves: one which inhibits trypsin, the other which inhibits elastase. In Vulpes vulpes (Red fox), this protein is Double-headed protease inhibitor, submandibular gland.